Consider the following 686-residue polypeptide: Heat shock 70 kDa protein 12B (686 aa).

Residues 12–53 (LYIGSSPERSPVPSPPGSPRTQESCGIAPLTPSQSPKPEVRA) form a disordered region. Phosphoserine occurs at positions 25 and 29. A Phosphothreonine modification is found at Thr42. Ser44, Ser46, and Ser276 each carry phosphoserine.

The protein belongs to the heat shock protein 70 family. As to expression, highest expression in muscle and heart. Lower levels in liver and kidney.

The protein is Heat shock 70 kDa protein 12B (HSPA12B) of Homo sapiens (Human).